The primary structure comprises 274 residues: 2,3,4,5-tetrahydropyridine-2,6-dicarboxylate N-succinyltransferase (274 aa).

Substrate-binding residues include Arg104 and Asp141.

Belongs to the transferase hexapeptide repeat family. Homotrimer.

The protein localises to the cytoplasm. It carries out the reaction (S)-2,3,4,5-tetrahydrodipicolinate + succinyl-CoA + H2O = (S)-2-succinylamino-6-oxoheptanedioate + CoA. It functions in the pathway amino-acid biosynthesis; L-lysine biosynthesis via DAP pathway; LL-2,6-diaminopimelate from (S)-tetrahydrodipicolinate (succinylase route): step 1/3. The polypeptide is 2,3,4,5-tetrahydropyridine-2,6-dicarboxylate N-succinyltransferase (Shewanella denitrificans (strain OS217 / ATCC BAA-1090 / DSM 15013)).